Consider the following 166-residue polypeptide: Transcriptional repressor NrdR (166 aa).

A zinc finger lies at 3-34 (CPFCGHDDTQVKDSRSTEDGVAIRRRRVCSAC). One can recognise an ATP-cone domain in the interval 49-139 (LSVTKADGRR…VYRDFREVEA (91 aa)). Residues 146–166 (DMKPIPGETDTPSPDDSQETP) form a disordered region.

The protein belongs to the NrdR family. Zn(2+) serves as cofactor.

Negatively regulates transcription of bacterial ribonucleotide reductase nrd genes and operons by binding to NrdR-boxes. The polypeptide is Transcriptional repressor NrdR (Gluconobacter oxydans (strain 621H) (Gluconobacter suboxydans)).